The chain runs to 333 residues: Foldase protein PrsA (333 aa).

An N-terminal signal peptide occupies residues 1–19; that stretch reads MKKRHLLIAGLACMTILGA. The N-palmitoyl cysteine moiety is linked to residue C20. A lipid anchor (S-diacylglycerol cysteine) is attached at C20. The region spanning 155–245 is the PpiC domain; it reads LIEVEASHIL…YGYHIILVTD (91 aa). The interval 291-333 is disordered; that stretch reads GLFDLPDAPPVEDTPEIDGEDASDEAEDQAEDADENAEEEDES. Residues 303-333 are compositionally biased toward acidic residues; that stretch reads DTPEIDGEDASDEAEDQAEDADENAEEEDES.

The protein belongs to the PrsA family.

It localises to the cell membrane. It carries out the reaction [protein]-peptidylproline (omega=180) = [protein]-peptidylproline (omega=0). In terms of biological role, plays a major role in protein secretion by helping the post-translocational extracellular folding of several secreted proteins. The chain is Foldase protein PrsA from Halalkalibacterium halodurans (strain ATCC BAA-125 / DSM 18197 / FERM 7344 / JCM 9153 / C-125) (Bacillus halodurans).